A 434-amino-acid chain; its full sequence is Arrestin domain-containing protein 1 (434 aa).

Residues 292–349 (SPCPGRESSPGTLSLVVPSAPPQEEAEAVASGPHFSDPVSLSTKSHSQQQPLSAPLGS) form a disordered region. Residues 330–343 (VSLSTKSHSQQQPL) are compositionally biased toward polar residues. 2 short sequence motifs (PPxY motif) span residues 401–404 (PPEY) and 414–417 (PPSY).

This sequence belongs to the arrestin family. In terms of assembly, interacts (via PPxY motifs) with ITCH (via WW domains); the interaction is direct and participates in the recruitment of the ubiquitin-protein ligase ITCH to the NOTCH1 receptor. Interacts with ARRB1 and ARRB2; the interaction is direct. Interacts with TSG101; may recruit TSG101 to the plasma membrane. Interacts (via PPxY motifs) with WWP2 (via WW domains); ubiquitinates ARRDC1. Interacts with SLC11A2; controls the incorporation of SLC11A2 into extracellular vesicles through an ubiquitination-dependent mechanism. Interacts with WWP1 (via WW domains). Interacts with NEDD4 (via WW domains). Interacts with PDCD6IP. Post-translationally, ubiquitinated. Ubiquitination by WWP2; promotes localization to extracellular microvesicles. Ubiquitinated by WWP1.

It localises to the cell membrane. In terms of biological role, functions as an adapter recruiting ubiquitin-protein ligases to their specific substrates. Through an ubiquitination-dependent mechanism plays for instance a role in the incorporation of SLC11A2 into extracellular vesicles. More generally, plays a role in the extracellular transport of proteins between cells through the release in the extracellular space of microvesicles. By participating to the ITCH-mediated ubiquitination and subsequent degradation of NOTCH1, negatively regulates the NOTCH signaling pathway. This Mus musculus (Mouse) protein is Arrestin domain-containing protein 1.